We begin with the raw amino-acid sequence, 115 residues long: U3-lycotoxin-Ls1q (115 aa).

Residues 1–20 form the signal peptide; it reads MKFVLLFGVLLVTLFSYSSA. Residues 21–44 constitute a propeptide that is removed on maturation; it reads EMFDDFDQADEDELLSLIEKEEAR. 4 disulfide bridges follow: cysteine 48–cysteine 63, cysteine 55–cysteine 72, cysteine 62–cysteine 87, and cysteine 74–cysteine 85.

The protein belongs to the neurotoxin 19 (CSTX) family. 01 subfamily. In terms of tissue distribution, expressed by the venom gland.

The protein resides in the secreted. The polypeptide is U3-lycotoxin-Ls1q (Lycosa singoriensis (Wolf spider)).